Reading from the N-terminus, the 671-residue chain is DNA ligase (671 aa).

Residues 32–36, 81–82, and glutamate 113 contribute to the NAD(+) site; these read DAEYD and SL. Lysine 115 (N6-AMP-lysine intermediate) is an active-site residue. Arginine 136, glutamate 173, lysine 290, and lysine 314 together coordinate NAD(+). Zn(2+)-binding residues include cysteine 408, cysteine 411, cysteine 426, and cysteine 432. The 79-residue stretch at 593 to 671 folds into the BRCT domain; it reads EIDSPFAGKT…ETEMLRLLGS (79 aa).

This sequence belongs to the NAD-dependent DNA ligase family. LigA subfamily. The cofactor is Mg(2+). Requires Mn(2+) as cofactor.

The enzyme catalyses NAD(+) + (deoxyribonucleotide)n-3'-hydroxyl + 5'-phospho-(deoxyribonucleotide)m = (deoxyribonucleotide)n+m + AMP + beta-nicotinamide D-nucleotide.. Its function is as follows. DNA ligase that catalyzes the formation of phosphodiester linkages between 5'-phosphoryl and 3'-hydroxyl groups in double-stranded DNA using NAD as a coenzyme and as the energy source for the reaction. It is essential for DNA replication and repair of damaged DNA. The polypeptide is DNA ligase (Escherichia coli O6:H1 (strain CFT073 / ATCC 700928 / UPEC)).